We begin with the raw amino-acid sequence, 957 residues long: Valine--tRNA ligase (957 aa).

The 'HIGH' region motif lies at 45 to 55; sequence PNVTGSLHMGH. Residues 571–575 carry the 'KMSKS' region motif; it reads KMSKS. Residue Lys-574 coordinates ATP. Residues 887 to 946 adopt a coiled-coil conformation; that stretch reads VVDFAAEQARLEKELGKAEADIKRAEAKLANEKFVANAAEEVVEEEREKREAAVARKVKI.

Belongs to the class-I aminoacyl-tRNA synthetase family. ValS type 1 subfamily. Monomer.

The protein resides in the cytoplasm. It carries out the reaction tRNA(Val) + L-valine + ATP = L-valyl-tRNA(Val) + AMP + diphosphate. Functionally, catalyzes the attachment of valine to tRNA(Val). As ValRS can inadvertently accommodate and process structurally similar amino acids such as threonine, to avoid such errors, it has a 'posttransfer' editing activity that hydrolyzes mischarged Thr-tRNA(Val) in a tRNA-dependent manner. This chain is Valine--tRNA ligase, found in Rhodopseudomonas palustris (strain ATCC BAA-98 / CGA009).